We begin with the raw amino-acid sequence, 615 residues long: Protein PSK SIMULATOR 2 (615 aa).

Glycine 2 is lipidated: N-myristoyl glycine. A compositionally biased stretch (basic and acidic residues) spans 16–27 (KKLRSNDDDKSR). 2 disordered regions span residues 16 to 59 (KKLR…KSSK) and 506 to 529 (AHGVKLQETNHVSPPNNRTISNTQ). Over residues 42-52 (SDSYYSDNYGG) the composition is skewed to low complexity. Residues 512–529 (QETNHVSPPNNRTISNTQ) show a composition bias toward polar residues.

It localises to the nucleus. Functionally, promotes seedling growth probably via the regulation of phytosulfokine (PSK) signaling; PSK are peptide phytohormones acting as growth factors. Involved in PSK-induced root growth. Together with PSI1 and PSI3, required during vegetative growth and reproduction. In Arabidopsis thaliana (Mouse-ear cress), this protein is Protein PSK SIMULATOR 2.